We begin with the raw amino-acid sequence, 683 residues long: Cytochrome P450 monooxygenase htyF (683 aa).

Residues 8 to 28 (PALLAASVVLAVSLVSYVIQL) form a helical membrane-spanning segment. The N-linked (GlcNAc...) asparagine glycan is linked to Asn-29. Cys-481 contributes to the heme binding site. A glycan (N-linked (GlcNAc...) asparagine) is linked at Asn-581. A helical membrane pass occupies residues 588-608 (LYVFVVLVACVAALFIGIGIY).

It belongs to the cytochrome P450 family. It depends on heme as a cofactor.

It localises to the membrane. It participates in antifungal biosynthesis. Cytochrome P450 monooxygenase; part of the gene cluster that mediates the de novo generation of L-homotyrosine from acetyl-CoA and 4-hydroxyphenyl-pyruvate. L-homotyrosine is a building block of echinocandin B, a fungal lipidated cyclic hexapeptide that acts as an antifungal agent. L-homotyrosine 4-hydroxyphenyl-pyruvate first undergoes an aldol-type condensation by htyA with the C-2 of acetyl-CoA followed by the release of CoA to form 2-(4-hydroxybenzyl)-malate. This is followed by isomerization of 2-(4-hydroxy-benzyl)-malate to 3-(4-hydroxybenzyl)-malate by htyD. Thereafter, 3-(4-hydroxybenzyl)-malate undergoes decarboxylation and oxidation to form 2-oxo-4-(4-hydroxybenzyl)butanoic acid, coupled to reduction of NAD(+) to NADH by htyC. The product then undergoes transamination catalyzed by htyB to form L-homotyrosine. This is Cytochrome P450 monooxygenase htyF from Aspergillus rugulosus (Emericella rugulosa).